We begin with the raw amino-acid sequence, 258 residues long: Tryptophan synthase alpha chain (258 aa).

Active-site proton acceptor residues include E47 and D58.

The protein belongs to the TrpA family. As to quaternary structure, tetramer of two alpha and two beta chains.

It catalyses the reaction (1S,2R)-1-C-(indol-3-yl)glycerol 3-phosphate + L-serine = D-glyceraldehyde 3-phosphate + L-tryptophan + H2O. The protein operates within amino-acid biosynthesis; L-tryptophan biosynthesis; L-tryptophan from chorismate: step 5/5. The alpha subunit is responsible for the aldol cleavage of indoleglycerol phosphate to indole and glyceraldehyde 3-phosphate. The protein is Tryptophan synthase alpha chain of Bacillus cereus (strain AH820).